A 33-amino-acid polypeptide reads, in one-letter code: Photosystem II reaction center protein Psb30 (33 aa).

The helical transmembrane segment at 5 to 25 (IVFQLTSLVLILAAGPLVVVL) threads the bilayer.

Belongs to the Psb30/Ycf12 family. As to quaternary structure, PSII is composed of 1 copy each of membrane proteins PsbA, PsbB, PsbC, PsbD, PsbE, PsbF, PsbH, PsbI, PsbJ, PsbK, PsbL, PsbM, PsbT, PsbX, PsbY, PsbZ, Psb30/Ycf12, peripheral proteins of the oxygen-evolving complex and a large number of cofactors. It forms dimeric complexes.

It localises to the plastid. The protein localises to the chloroplast thylakoid membrane. In terms of biological role, a core subunit of photosystem II (PSII), probably helps stabilize the reaction center. This is Photosystem II reaction center protein Psb30 from Tetradesmus obliquus (Green alga).